A 2523-amino-acid polypeptide reads, in one-letter code: Non-reducing polyketide synthase Preu3 (2523 aa).

Residues 58 to 247 (LQSLASERRA…KILAMTGSFH (190 aa)) form an N-terminal acylcarrier protein transacylase domain (SAT) region. The Ketosynthase family 3 (KS3) domain occupies 373–792 (DNAVAVVGMA…GSNGAMIVCQ (420 aa)). Catalysis depends on for beta-ketoacyl synthase activity residues Cys539, His674, and His715. The segment at 900–1207 (CFGGQVKAFV…KAFGSLADAT (308 aa)) is malonyl-CoA:ACP transacylase (MAT) domain. Residue Ser986 is the For acyl/malonyl transferase activity of the active site. Positions 1271 to 1398 (HELLTFSSFE…GLVAFGGTVE (128 aa)) are N-terminal hotdog fold. The PKS/mFAS DH domain occupies 1271–1573 (HELLTFSSFE…FTRVTVPGLR (303 aa)). Residues 1301-1568 (LVKGHAVVAQ…ALGCRFTRVT (268 aa)) form a product template (PT) domain region. His1305 acts as the Proton acceptor; for dehydratase activity in catalysis. The tract at residues 1421 to 1573 (ECDALRGSAT…FTRVTVPGLR (153 aa)) is C-terminal hotdog fold. Catalysis depends on Asp1483, which acts as the Proton donor; for dehydratase activity. Residues 1579–1601 (ANGDARAQERPSGSRISPSPLAP) form a disordered region. Residues 1639-1713 (VDYLAQVKAL…KLAEYLAKTL (75 aa)) form the Carrier domain. The residue at position 1673 (Ser1673) is an O-(pantetheine 4'-phosphoryl)serine. The tract at residues 1735–1757 (DAEQSSDESPYDSTDDSASGYGD) is disordered. Over residues 1738–1749 (QSSDESPYDSTD) the composition is skewed to acidic residues. Residues 1986 to 2085 (LEIGGGTGGT…MRQLLSSEGF (100 aa)) form a methyltransferase (CMeT) domain region. Residues 2218 to 2520 (LILHGGGHVL…RALEWLVEQC (303 aa)) are thioesterase (TE) domain.

The cofactor is pantetheine 4'-phosphate.

The catalysed reaction is 3 malonyl-CoA + acetyl-CoA + S-adenosyl-L-methionine + H(+) = 3-methylorsellinate + S-adenosyl-L-homocysteine + 3 CO2 + 4 CoA. In terms of biological role, non-reducing polyketide synthase; part of a gene cluster that mediates the biosynthesis of a yet unidentified natural product. The first step in the pathway is performed by Preu3 that condenses one acetyl-CoA starter unit with 3 malonyl-CoA units. Preu3 also catalyzes one methylation step to produce 3-methylorsellinate, an intermediate that exhibits significant antibacterial activities against methicillin-resistant Staphylococcus aureus, multidrug-resistant Enterococcus faecalis, multidrug-resistant Enterococcus faecium, and multidrug-resistant Staphylococcus epidermidis. In Preussia isomera (Coprophilous fungus), this protein is Non-reducing polyketide synthase Preu3.